Here is a 191-residue protein sequence, read N- to C-terminus: Protein UL140 (191 aa).

The chain crosses the membrane as a helical span at residues Thr28–Trp48.

The protein localises to the host membrane. The chain is Protein UL140 (UL140) from Homo sapiens (Human).